The primary structure comprises 358 residues: Protein-glutamate methylesterase/protein-glutamine glutaminase 3 (358 aa).

The Response regulatory domain maps to 2–118 (KILVVDDSAL…CGRLQEVAPL (117 aa)). At D52 the chain carries 4-aspartylphosphate. Positions 155–325 (NNEDHQLAIM…VPSMPEALLK (171 aa)) constitute a CheB-type methylesterase domain. Catalysis depends on residues S167, H194, and D291.

It belongs to the CheB family. Phosphorylated by CheA. Phosphorylation of the N-terminal regulatory domain activates the methylesterase activity.

The protein localises to the cytoplasm. It carries out the reaction [protein]-L-glutamate 5-O-methyl ester + H2O = L-glutamyl-[protein] + methanol + H(+). It catalyses the reaction L-glutaminyl-[protein] + H2O = L-glutamyl-[protein] + NH4(+). Involved in chemotaxis. Part of a chemotaxis signal transduction system that modulates chemotaxis in response to various stimuli. Catalyzes the demethylation of specific methylglutamate residues introduced into the chemoreceptors (methyl-accepting chemotaxis proteins or MCP) by CheR. Also mediates the irreversible deamidation of specific glutamine residues to glutamic acid. This chain is Protein-glutamate methylesterase/protein-glutamine glutaminase 3, found in Vibrio cholerae serotype O1 (strain ATCC 39315 / El Tor Inaba N16961).